We begin with the raw amino-acid sequence, 76 residues long: MDILKKSLFLVLFLGLISLSFCEEEKRENEDEEEQEDDEQSEEKRGLWKSLLKNVGKAAGKAALNAVTDMVNQGEQ.

The N-terminal stretch at 1–22 (MDILKKSLFLVLFLGLISLSFC) is a signal peptide. Positions 23 to 45 (EEEKRENEDEEEQEDDEQSEEKR) are excised as a propeptide. A disordered region spans residues 25-45 (EKRENEDEEEQEDDEQSEEKR). The span at 30-41 (EDEEEQEDDEQS) shows a compositional bias: acidic residues. At Q73 the chain carries Glutamine amide. The propeptide occupies 75–76 (EQ).

The protein belongs to the frog skin active peptide (FSAP) family. Dermaseptin subfamily. In terms of tissue distribution, expressed by the skin glands.

The protein localises to the secreted. Its function is as follows. Antimicrobial peptide. The chain is Dermaseptin-S7 from Phyllomedusa sauvagei (Sauvage's leaf frog).